A 319-amino-acid chain; its full sequence is GTP 3',8-cyclase (319 aa).

The Radical SAM core domain maps to 4–219 (KHGRKINYLR…SKHSDLIPVE (216 aa)). Residue Arg-13 participates in GTP binding. Residues Cys-20 and Cys-24 each coordinate [4Fe-4S] cluster. Residue Tyr-26 participates in S-adenosyl-L-methionine binding. Cys-27 serves as a coordination point for [4Fe-4S] cluster. Arg-63 provides a ligand contact to GTP. Gly-67 lines the S-adenosyl-L-methionine pocket. Thr-94 contacts GTP. S-adenosyl-L-methionine is bound at residue Ser-118. A GTP-binding site is contributed by Lys-155. An S-adenosyl-L-methionine-binding site is contributed by Met-189. [4Fe-4S] cluster is bound by residues Cys-249 and Cys-252. 254–256 (RVR) lines the GTP pocket. Cys-266 provides a ligand contact to [4Fe-4S] cluster.

Belongs to the radical SAM superfamily. MoaA family. Monomer and homodimer. It depends on [4Fe-4S] cluster as a cofactor.

It catalyses the reaction GTP + AH2 + S-adenosyl-L-methionine = (8S)-3',8-cyclo-7,8-dihydroguanosine 5'-triphosphate + 5'-deoxyadenosine + L-methionine + A + H(+). Its pathway is cofactor biosynthesis; molybdopterin biosynthesis. Its function is as follows. Catalyzes the cyclization of GTP to (8S)-3',8-cyclo-7,8-dihydroguanosine 5'-triphosphate. This chain is GTP 3',8-cyclase, found in Clostridium botulinum (strain Okra / Type B1).